A 164-amino-acid polypeptide reads, in one-letter code: IQ domain-containing protein F2 (164 aa).

IQ domains are found at residues 43-72 (RTKA…RAWI) and 99-128 (RERA…AIYI).

This is IQ domain-containing protein F2 (IQCF2) from Homo sapiens (Human).